A 362-amino-acid polypeptide reads, in one-letter code: GDSL esterase/lipase At5g22810 (362 aa).

The N-terminal stretch at 1–28 (MGFSGIWLNLYVVFGSLMVFERMVVMVV) is a signal peptide. S44 functions as the Nucleophile in the catalytic mechanism. Residues N159, N162, N264, and N329 are each glycosylated (N-linked (GlcNAc...) asparagine). Catalysis depends on residues D337 and H340.

Belongs to the 'GDSL' lipolytic enzyme family.

It localises to the secreted. The sequence is that of GDSL esterase/lipase At5g22810 from Arabidopsis thaliana (Mouse-ear cress).